The primary structure comprises 576 residues: MNIFNKLKHDIITASTQLYNNSEIANHASIETPKDSFNGDLSSNIAMIIAAKKNVPPREVALKFKEILNELPYIASIEIAGPGFINFTIKADSWHTAIKDILQNESKFFEIDVDKNKNINIEYVSANPTGPMHIGHARGAVYGDVLANILKKVGYPVTKEYYVNDAGSQINDLVSTVILRYREALGEKITITEGLYPGEYLIPVGQALAKEYGDKLLNMDELERFKIVKNFAIQKMLDLNKEDLKELGVKHDVFFSEQTLHDNGKIEKTVKLLTDMGLIYEGSVPAPKGKVHAEWENRTQELFKSTKYGDDQDRPIRKADGSWTYFASDLAYAKDKIDRGANHLIYVLGADHSGYVKRIEATVKALGKEQVKVDVKICQLVNFVENGVPVKMSKRLGTFASVQDVNHEVGKDIIRFMMLTRENNKTLDFDLIKVKEQSKENPIFYVQYAHVRTLSILSKAMETIPQSYNSFEAGTYDLSLLSSEEEIEIIKLLASWTKTLETAAKYFEPHRVAFYLINLASKFHALWNFGKENNDYRFIIENNVELTTARLALAKAIQKIIASGLEVIGVEPMTRM.

The 'HIGH' region signature appears at 126-136 (ANPTGPMHIGH).

This sequence belongs to the class-I aminoacyl-tRNA synthetase family. As to quaternary structure, monomer.

It localises to the cytoplasm. It carries out the reaction tRNA(Arg) + L-arginine + ATP = L-arginyl-tRNA(Arg) + AMP + diphosphate. This is Arginine--tRNA ligase from Rickettsia bellii (strain OSU 85-389).